A 1336-amino-acid chain; its full sequence is Glutamate receptor ionotropic, NMDA 2D (1336 aa).

Positions Met1–Pro27 are cleaved as a signal peptide. The Extracellular portion of the chain corresponds to Phe28 to Ser582. An N-linked (GlcNAc...) asparagine glycan is attached at Asn92. An intrachain disulfide couples Cys104 to Cys348. 4 N-linked (GlcNAc...) asparagine glycosylation sites follow: Asn352, Asn366, Asn384, and Asn467. Intrachain disulfides connect Cys455–Cys483 and Cys462–Cys484. L-glutamate contacts are provided by Ser539, Thr541, and Arg546. A glycan (N-linked (GlcNAc...) asparagine) is linked at Asn569. The chain crosses the membrane as a helical span at residues Pro583–Phe604. Residues Glu605 to Ile629 are Cytoplasmic-facing. Positions Gly630–Phe641 form an intramembrane region, discontinuously helical. The pore-forming stretch occupies residues Lys631 to Pro650. Topologically, residues Asn642–Thr653 are cytoplasmic. Residues Thr654–Thr674 traverse the membrane as a helical segment. Over Ala675–Asp843 the chain is Extracellular. 3 residues coordinate L-glutamate: Ser717, Thr718, and Asp759. A disulfide bridge connects residues Cys773 and Cys828. Residues Asn844–His867 traverse the membrane as a helical segment. The Cytoplasmic portion of the chain corresponds to Leu868–Val1336. 3 disordered regions span residues Glu900 to Pro934, Arg981 to Gly1123, and Arg1225 to Val1336. Residues Ala902–Phe932 are compositionally biased toward pro residues. Residues Arg981 to Pro991 show a composition bias toward low complexity. Residues Leu992–Ser1006 show a composition bias toward pro residues. The span at Ala1035–Pro1044 shows a compositional bias: low complexity. Gly residues predominate over residues Pro1074 to Ala1089. Residues Ala1091 to Pro1104 show a composition bias toward pro residues. Basic residues predominate over residues Arg1225–His1240. An Omega-N-methylarginine modification is found at Arg1316. Phosphoserine is present on Ser1326. Residues Ser1334–Val1336 carry the PDZ-binding motif.

It belongs to the glutamate-gated ion channel (TC 1.A.10.1) family. NR2D/GRIN2D subfamily. As to quaternary structure, heterotetramer. Forms heterotetrameric channels composed of two GluN1/zeta subunits (GRIN1), and two identical GluN2/epsilon subunits (GRIN2A, GRIN2B, GRIN2C or GRIN2D) or GluN3 subunits (GRIN3A or GRIN3B) (in vitro). In vivo, the subunit composition may depend on the expression levels of the different subunits. Interacts with PDZ domains of PATJ and DLG4.

It localises to the cell membrane. Its subcellular location is the postsynaptic cell membrane. It catalyses the reaction Ca(2+)(in) = Ca(2+)(out). The catalysed reaction is Na(+)(in) = Na(+)(out). It carries out the reaction K(+)(in) = K(+)(out). Its function is as follows. Component of N-methyl-D-aspartate (NMDA) receptors (NMDARs) that function as heterotetrameric, ligand-gated cation channels with high calcium permeability and voltage-dependent block by Mg(2+). Participates in synaptic plasticity for learning and memory formation. Channel activation requires binding of the neurotransmitter L-glutamate to the GluN2 subunit, glycine or D-serine binding to the GluN1 subunit, plus membrane depolarization to eliminate channel inhibition by Mg(2+). NMDARs mediate simultaneously the potasium efflux and the influx of calcium and sodium. Each GluN2 subunit confers differential attributes to channel properties, including activation, deactivation and desensitization kinetics, pH sensitivity, Ca2(+) permeability, and binding to allosteric modulators. This chain is Glutamate receptor ionotropic, NMDA 2D, found in Homo sapiens (Human).